The sequence spans 409 residues: Thiaminase-1 (409 aa).

An N-terminal signal peptide occupies residues Met1–Gly29. The active-site Nucleophile is the Cys143. The active-site Proton acceptor is Glu271.

In terms of assembly, monomer.

Its subcellular location is the secreted. It carries out the reaction pyridine + thiamine = heteropyrithiamine + 5-(2-hydroxyethyl)-4-methylthiazole. Its function is as follows. Degrades thiamine by replacing its thiazole moiety with a wide range of nucleophiles. The protein is Thiaminase-1 of Paenibacillus thiaminolyticus (Bacillus thiaminolyticus).